The chain runs to 457 residues: Glutamate--tRNA ligase 1 (457 aa).

The 'HIGH' region motif lies at 9–19 (PSPTGYIHIGN). The short motif at 250 to 254 (GLSKR) is the 'KMSKS' region element. Residue lysine 253 coordinates ATP.

The protein belongs to the class-I aminoacyl-tRNA synthetase family. Glutamate--tRNA ligase type 1 subfamily. As to quaternary structure, monomer.

It is found in the cytoplasm. It catalyses the reaction tRNA(Glu) + L-glutamate + ATP = L-glutamyl-tRNA(Glu) + AMP + diphosphate. In terms of biological role, catalyzes the attachment of glutamate to tRNA(Glu) in a two-step reaction: glutamate is first activated by ATP to form Glu-AMP and then transferred to the acceptor end of tRNA(Glu). This chain is Glutamate--tRNA ligase 1, found in Brucella ovis (strain ATCC 25840 / 63/290 / NCTC 10512).